The chain runs to 489 residues: Protein MGF 505-2R (489 aa).

It belongs to the asfivirus MGF 505 family.

Its function is as follows. Plays a role in virus cell tropism, and may be required for efficient virus replication in macrophages. The sequence is that of Protein MGF 505-2R from Ornithodoros (relapsing fever ticks).